The following is a 420-amino-acid chain: Transcription factor bHLH89 (420 aa).

Positions 196-216 are disordered; it reads EENNNLDDGLNRKGRGSKKRK. Basic residues predominate over residues 207–216; the sequence is RKGRGSKKRK. The 50-residue stretch at 212–261 folds into the bHLH domain; it reads SKKRKIFPTERERRVHFKDRFGDLKNLIPNPTKNDRASIVGEAIDYIKEL.

In terms of assembly, homodimer. In terms of tissue distribution, flowers.

The protein localises to the nucleus. The protein is Transcription factor bHLH89 (BHLH89) of Arabidopsis thaliana (Mouse-ear cress).